The primary structure comprises 187 residues: Cell division protein SepF (187 aa).

Residues 21 to 97 (EVEVPDKQQQ…ATPNNASQES (77 aa)) are disordered. Composition is skewed to polar residues over residues 38 to 63 (EQSQ…YTTT) and 70 to 97 (RMSN…SQES).

This sequence belongs to the SepF family. Homodimer. Interacts with FtsZ.

It localises to the cytoplasm. Its function is as follows. Cell division protein that is part of the divisome complex and is recruited early to the Z-ring. Probably stimulates Z-ring formation, perhaps through the cross-linking of FtsZ protofilaments. Its function overlaps with FtsA. The polypeptide is Cell division protein SepF (Staphylococcus aureus (strain Mu3 / ATCC 700698)).